The following is a 131-amino-acid chain: Small ribosomal subunit protein uS8 (131 aa).

This sequence belongs to the universal ribosomal protein uS8 family. Part of the 30S ribosomal subunit. Contacts proteins S5 and S12.

One of the primary rRNA binding proteins, it binds directly to 16S rRNA central domain where it helps coordinate assembly of the platform of the 30S subunit. In Geobacillus stearothermophilus (Bacillus stearothermophilus), this protein is Small ribosomal subunit protein uS8.